Reading from the N-terminus, the 146-residue chain is Angiogenin (146 aa).

The N-terminal stretch at 1–24 (MVMGLGLFLLVFMLGLGLTPPTLA) is a signal peptide. The residue at position 25 (glutamine 25) is a Pyrrolidone carboxylic acid. Histidine 37 acts as the Proton acceptor in catalysis. TRNA is bound at residue arginine 45. 3 disulfides stabilise this stretch: cysteine 50–cysteine 105, cysteine 63–cysteine 116, and cysteine 81–cysteine 131. The short motif at 55–59 (RRRGL) is the Nucleolar localization signal element. TRNA-binding residues include cysteine 105 and isoleucine 127. Histidine 138 serves as the catalytic Proton donor.

It belongs to the pancreatic ribonuclease family. As to quaternary structure, homodimer. Interacts with RNH1; inhibiting ANG ribonuclease activity. Interacts with PCNA.

The protein resides in the secreted. The protein localises to the nucleus. It localises to the nucleolus. It is found in the cytoplasm. Its subcellular location is the stress granule. Has weak tRNA ribonuclease activity by itself due to partial autoinhibition by its C-terminus, which folds into a short alpha-helix that partially occludes the substrate-binding site. In absence of stress, the ribonuclease activity is inhibited by RNH1 in the cytoplasm. In response to stress, dissociates from RNH1 in the cytoplasm and associates with cytoplasmic ribosomes with vacant A-sites: ribosomes directly activate the tRNA ribonuclease activity of ANG by refolding the C-terminal alpha-helix. In response to stress, the angiogenic activity of ANG is inhibited by RNH1 in the nucleus. Secreted ribonuclease that can either promote or restrict cell proliferation of target cells, depending on the context. Endocytosed in target cells via its receptor PLXNB2 and translocates to the cytoplasm or nucleus. Under stress conditions, localizes to the cytoplasm and promotes the assembly of stress granules (SGs): specifically cleaves a subset of tRNAs within anticodon loops to produce tRNA-derived stress-induced fragments (tiRNAs), resulting in translation repression and inhibition of cell proliferation. tiRNas also prevent formation of apoptosome, thereby promoting cell survival. Preferentially cleaves RNAs between a pyrimidine and an adenosine residue, suggesting that it cleaves the anticodon loop of tRNA(Ala) (32-UUAGCAU-38) after positions 33 and 36. Cleaves a subset of tRNAs, including tRNA(Ala), tRNA(Glu), tRNA(Gly), tRNA(Lys), tRNA(Val), tRNA(His), tRNA(Asp) and tRNA(Sec). Under growth conditions and in differentiated cells, translocates to the nucleus and stimulates ribosomal RNA (rRNA) transcription, including that containing the initiation site sequences of 45S rRNA, thereby promoting cell growth and proliferation. Angiogenin induces vascularization of normal and malignant tissues via its ability to promote rRNA transcription. Involved in hematopoietic stem and progenitor cell (HSPC) growth and survival by promoting rRNA transcription in growth conditions and inhibiting translation in response to stress, respectively. Mediates the crosstalk between myeloid and intestinal epithelial cells to protect the intestinal epithelial barrier integrity: secreted by myeloid cells and promotes intestinal epithelial cells proliferation and survival. Also mediates osteoclast-endothelial cell crosstalk in growing bone: produced by osteoclasts and protects the neighboring vascular cells against senescence by promoting rRNA transcription. The chain is Angiogenin (ANG) from Rhinopithecus avunculus (Tonkin snub-nosed monkey).